The primary structure comprises 565 residues: CTP synthase (565 aa).

An amidoligase domain region spans residues 1–272 (MARPKNVKHI…DLRVMKKLGL (272 aa)). CTP is bound at residue S18. Residue S18 participates in UTP binding. 19 to 24 (SLGKGI) contacts ATP. Residue Y59 participates in L-glutamine binding. D76 serves as a coordination point for ATP. Positions 76 and 146 each coordinate Mg(2+). Residues 153 to 155 (DIE), 193 to 198 (KTKPTQ), and K229 contribute to the CTP site. Residues 193–198 (KTKPTQ) and K229 contribute to the UTP site. The Glutamine amidotransferase type-1 domain maps to 299 to 543 (TIGICGKYTE…VHAAKEFAQG (245 aa)). G363 is an L-glutamine binding site. The active-site Nucleophile; for glutamine hydrolysis is the C390. Residues 391–394 (LGMQ), E414, and R471 contribute to the L-glutamine site. Residues H516 and E518 contribute to the active site.

This sequence belongs to the CTP synthase family. In terms of assembly, homotetramer.

The enzyme catalyses UTP + L-glutamine + ATP + H2O = CTP + L-glutamate + ADP + phosphate + 2 H(+). The catalysed reaction is L-glutamine + H2O = L-glutamate + NH4(+). It carries out the reaction UTP + NH4(+) + ATP = CTP + ADP + phosphate + 2 H(+). The protein operates within pyrimidine metabolism; CTP biosynthesis via de novo pathway; CTP from UDP: step 2/2. With respect to regulation, allosterically activated by GTP, when glutamine is the substrate; GTP has no effect on the reaction when ammonia is the substrate. The allosteric effector GTP functions by stabilizing the protein conformation that binds the tetrahedral intermediate(s) formed during glutamine hydrolysis. Inhibited by the product CTP, via allosteric rather than competitive inhibition. Functionally, catalyzes the ATP-dependent amination of UTP to CTP with either L-glutamine or ammonia as the source of nitrogen. Regulates intracellular CTP levels through interactions with the four ribonucleotide triphosphates. This Chlorobaculum tepidum (strain ATCC 49652 / DSM 12025 / NBRC 103806 / TLS) (Chlorobium tepidum) protein is CTP synthase.